A 1094-amino-acid polypeptide reads, in one-letter code: AP-3 complex subunit beta-1 (1094 aa).

Positions 1–11 (MSSNSFPYNEQ) are enriched in polar residues. 2 disordered regions span residues 1 to 31 (MSSN…ISPS) and 268 to 292 (DNGK…KPYT). Phosphoserine is present on residues serine 276 and serine 609. Residues 662–811 (PAGKAKQENS…EKKTKQDRTP (150 aa)) are disordered. Over residues 666–677 (AKQENSAKKFYS) the composition is skewed to basic and acidic residues. Acidic residues-rich tracts occupy residues 678 to 696 (ESEE…ESES) and 705 to 726 (ESGE…EQDS). Composition is skewed to basic and acidic residues over residues 727–738 (ESGRESGLENKR) and 748–764 (GKSD…KSKT). 2 positions are modified to phosphoserine: serine 750 and serine 752. A compositionally biased stretch (low complexity) spans 765 to 777 (SDSSNDESSSIED). Acidic residues predominate over residues 778–791 (SSSDSESESEPESE). Over residues 792–811 (SESRRVTKEKEKKTKQDRTP) the composition is skewed to basic and acidic residues.

The protein belongs to the adaptor complexes large subunit family. In terms of assembly, adaptor protein complex 3 (AP-3) is a heterotetramer composed of two large adaptins (delta-type subunit AP3D1 and beta-type subunit AP3B1 or AP3B2), a medium adaptin (mu-type subunit AP3M1 or AP3M2) and a small adaptin (sigma-type subunit APS1 or AP3S2). AP-3 associates with the BLOC-1 complex. Interacts with KIF3A; interaction is direct; interaction is impaired by pyrophosphorylation of AP3B1. Phosphorylated on serine residues. Post-translationally, pyrophosphorylation by 5-diphosphoinositol pentakisphosphate (5-IP7) impairs interaction with KIF3A. Serine pyrophosphorylation is achieved by Mg(2+)-dependent, but enzyme independent transfer of a beta-phosphate from a inositol pyrophosphate to a pre-phosphorylated serine residue. Ubiquitously expressed.

It localises to the cytoplasmic vesicle. Its subcellular location is the clathrin-coated vesicle membrane. The protein resides in the golgi apparatus. Functionally, subunit of non-clathrin- and clathrin-associated adaptor protein complex 3 (AP-3) that plays a role in protein sorting in the late-Golgi/trans-Golgi network (TGN) and/or endosomes. The AP complexes mediate both the recruitment of clathrin to membranes and the recognition of sorting signals within the cytosolic tails of transmembrane cargo molecules. AP-3 appears to be involved in the sorting of a subset of transmembrane proteins targeted to lysosomes and lysosome-related organelles. In concert with the BLOC-1 complex, AP-3 is required to target cargos into vesicles assembled at cell bodies for delivery into neurites and nerve terminals. The chain is AP-3 complex subunit beta-1 (AP3B1) from Homo sapiens (Human).